The sequence spans 411 residues: Serine--tRNA ligase (411 aa).

226–228 (TSE) lines the L-serine pocket. Position 257–259 (257–259 (RQE)) interacts with ATP. Residue E280 coordinates L-serine. An ATP-binding site is contributed by 344–347 (EISS). Position 379 (S379) interacts with L-serine.

Belongs to the class-II aminoacyl-tRNA synthetase family. Type-1 seryl-tRNA synthetase subfamily. Homodimer. The tRNA molecule binds across the dimer.

It is found in the cytoplasm. It carries out the reaction tRNA(Ser) + L-serine + ATP = L-seryl-tRNA(Ser) + AMP + diphosphate + H(+). The enzyme catalyses tRNA(Sec) + L-serine + ATP = L-seryl-tRNA(Sec) + AMP + diphosphate + H(+). It participates in aminoacyl-tRNA biosynthesis; selenocysteinyl-tRNA(Sec) biosynthesis; L-seryl-tRNA(Sec) from L-serine and tRNA(Sec): step 1/1. Functionally, catalyzes the attachment of serine to tRNA(Ser). Is also able to aminoacylate tRNA(Sec) with serine, to form the misacylated tRNA L-seryl-tRNA(Sec), which will be further converted into selenocysteinyl-tRNA(Sec). The sequence is that of Serine--tRNA ligase from Campylobacter lari (strain RM2100 / D67 / ATCC BAA-1060).